A 237-amino-acid polypeptide reads, in one-letter code: Phosphoribosylaminoimidazole-succinocarboxamide synthase (237 aa).

This sequence belongs to the SAICAR synthetase family.

The catalysed reaction is 5-amino-1-(5-phospho-D-ribosyl)imidazole-4-carboxylate + L-aspartate + ATP = (2S)-2-[5-amino-1-(5-phospho-beta-D-ribosyl)imidazole-4-carboxamido]succinate + ADP + phosphate + 2 H(+). It functions in the pathway purine metabolism; IMP biosynthesis via de novo pathway; 5-amino-1-(5-phospho-D-ribosyl)imidazole-4-carboxamide from 5-amino-1-(5-phospho-D-ribosyl)imidazole-4-carboxylate: step 1/2. The protein is Phosphoribosylaminoimidazole-succinocarboxamide synthase of Serratia proteamaculans (strain 568).